The sequence spans 277 residues: Diaminopimelate epimerase (277 aa).

Positions 15 and 74 each coordinate substrate. Catalysis depends on C83, which acts as the Proton donor. Substrate-binding positions include 84-85, N159, N194, and 212-213; these read GN and ER. C221 (proton acceptor) is an active-site residue. 222-223 contributes to the substrate binding site; that stretch reads GT.

Belongs to the diaminopimelate epimerase family. In terms of assembly, homodimer.

It is found in the cytoplasm. The enzyme catalyses (2S,6S)-2,6-diaminopimelate = meso-2,6-diaminopimelate. Its pathway is amino-acid biosynthesis; L-lysine biosynthesis via DAP pathway; DL-2,6-diaminopimelate from LL-2,6-diaminopimelate: step 1/1. Functionally, catalyzes the stereoinversion of LL-2,6-diaminopimelate (L,L-DAP) to meso-diaminopimelate (meso-DAP), a precursor of L-lysine and an essential component of the bacterial peptidoglycan. The protein is Diaminopimelate epimerase of Corynebacterium glutamicum (strain R).